Here is a 579-residue protein sequence, read N- to C-terminus: Aspartate--tRNA(Asp/Asn) ligase (579 aa).

E171 serves as a coordination point for L-aspartate. Residues 195 to 198 are aspartate; that stretch reads QLFK. R217 lines the L-aspartate pocket. ATP is bound by residues 217–219 and Q226; that span reads RDE. Residue H444 participates in L-aspartate binding. E475 is an ATP binding site. Residue R482 coordinates L-aspartate. 527-530 is an ATP binding site; the sequence is GLDR.

Belongs to the class-II aminoacyl-tRNA synthetase family. Type 1 subfamily. In terms of assembly, homodimer.

It localises to the cytoplasm. It carries out the reaction tRNA(Asx) + L-aspartate + ATP = L-aspartyl-tRNA(Asx) + AMP + diphosphate. In terms of biological role, aspartyl-tRNA synthetase with relaxed tRNA specificity since it is able to aspartylate not only its cognate tRNA(Asp) but also tRNA(Asn). Reaction proceeds in two steps: L-aspartate is first activated by ATP to form Asp-AMP and then transferred to the acceptor end of tRNA(Asp/Asn). The chain is Aspartate--tRNA(Asp/Asn) ligase from Thermotoga maritima (strain ATCC 43589 / DSM 3109 / JCM 10099 / NBRC 100826 / MSB8).